The primary structure comprises 327 residues: MNLTPTTPVDDDNTEPGPFIELSRESWAVLSDSTEIDIDEATLDHIRGLGDPTSHRDVVEVYRPLTQLIHLYCMHTGALFDASNNFLQLTRHGMKRTPFVIGIAGSVAVGKSTVARLLRELLGRSPRRPVVDLVTTDGFLYPNRVLEERELLSRKGFPESYDRKALLRFVVDVKSGMPEVTAPVYSHVTYDIVPNQQLVVRQPDILIIEGLNVLQPPRRRSSGTMGLALSDFFDFSVYVDAEEADIIRWYINRFLTLRQTAFTDPHSFFGEYARMPDNEAITIAKEIWDTINGPNLVQNVLPTRGRATAILHKGPDHEVRNVWIRKV.

An ATP-binding site is contributed by 105 to 112 (GSVAVGKS).

It belongs to the prokaryotic pantothenate kinase family.

It is found in the cytoplasm. It carries out the reaction (R)-pantothenate + ATP = (R)-4'-phosphopantothenate + ADP + H(+). It participates in cofactor biosynthesis; coenzyme A biosynthesis; CoA from (R)-pantothenate: step 1/5. The polypeptide is Pantothenate kinase (Cutibacterium acnes (strain DSM 16379 / KPA171202) (Propionibacterium acnes)).